A 499-amino-acid polypeptide reads, in one-letter code: Putative antiporter subunit mnhD2 (499 aa).

Helical transmembrane passes span S3 to T23, I32 to V52, L78 to F98, Y108 to S128, L130 to L150, I161 to L181, I206 to F226, L240 to F260, P273 to Y293, I308 to F328, L330 to M350, F368 to G388, G403 to F423, and T450 to M470.

The protein belongs to the CPA3 antiporters (TC 2.A.63) subunit D family. May form a heterooligomeric complex that consists of seven subunits: mnhA2, mnhB2, mnhC2, mnhD2, mnhE2, mnhF2 and mnhG2.

The protein resides in the cell membrane. The polypeptide is Putative antiporter subunit mnhD2 (mnhD2) (Staphylococcus haemolyticus (strain JCSC1435)).